The chain runs to 148 residues: Transcriptional regulator MraZ (148 aa).

2 consecutive SpoVT-AbrB domains span residues 5-51 and 80-123; these read STQL…PQPV and ACDV…DMAK.

This sequence belongs to the MraZ family. Forms oligomers.

Its subcellular location is the cytoplasm. The protein localises to the nucleoid. The sequence is that of Transcriptional regulator MraZ from Nitrosomonas eutropha (strain DSM 101675 / C91 / Nm57).